The primary structure comprises 179 residues: Large ribosomal subunit protein uL6 (179 aa).

The protein belongs to the universal ribosomal protein uL6 family. As to quaternary structure, part of the 50S ribosomal subunit.

Functionally, this protein binds to the 23S rRNA, and is important in its secondary structure. It is located near the subunit interface in the base of the L7/L12 stalk, and near the tRNA binding site of the peptidyltransferase center. The polypeptide is Large ribosomal subunit protein uL6 (Leptospira borgpetersenii serovar Hardjo-bovis (strain JB197)).